The following is a 150-amino-acid chain: Large ribosomal subunit protein bL9 (150 aa).

Belongs to the bacterial ribosomal protein bL9 family.

In terms of biological role, binds to the 23S rRNA. This Polaromonas sp. (strain JS666 / ATCC BAA-500) protein is Large ribosomal subunit protein bL9.